Reading from the N-terminus, the 251-residue chain is 5'-nucleotidase SurE (251 aa).

Asp-8, Asp-9, Ser-39, and Asn-91 together coordinate a divalent metal cation.

This sequence belongs to the SurE nucleotidase family. A divalent metal cation serves as cofactor.

It is found in the cytoplasm. The catalysed reaction is a ribonucleoside 5'-phosphate + H2O = a ribonucleoside + phosphate. In terms of biological role, nucleotidase that shows phosphatase activity on nucleoside 5'-monophosphates. The polypeptide is 5'-nucleotidase SurE (Halorhodospira halophila (strain DSM 244 / SL1) (Ectothiorhodospira halophila (strain DSM 244 / SL1))).